The primary structure comprises 100 residues: Small ribosomal subunit protein bS6 (100 aa).

It belongs to the bacterial ribosomal protein bS6 family.

Binds together with bS18 to 16S ribosomal RNA. This chain is Small ribosomal subunit protein bS6, found in Tropheryma whipplei (strain Twist) (Whipple's bacillus).